The primary structure comprises 174 residues: Auxin-responsive protein IAA2 (174 aa).

Residues leucine 16 to leucine 20 carry the EAR-like (transcriptional repression) motif. The disordered stretch occupies residues phenylalanine 44–valine 67. The PB1 domain occupies valine 77–glycine 164.

It belongs to the Aux/IAA family. In terms of assembly, homodimers and heterodimers. Interacts with the auxin-responsive protein IAA1. Interacts with TPL. As to expression, preferentially expressed in vegetative organs.

Its subcellular location is the nucleus. Functionally, aux/IAA proteins are short-lived transcriptional factors that function as repressors of early auxin response genes at low auxin concentrations. Repression is thought to result from the interaction with auxin response factors (ARFs), proteins that bind to the auxin-responsive promoter element (AuxRE). Formation of heterodimers with ARF proteins may alter their ability to modulate early auxin response genes expression. In Arabidopsis thaliana (Mouse-ear cress), this protein is Auxin-responsive protein IAA2 (IAA2).